Consider the following 82-residue polypeptide: MSVYDEVEIEDMTFDPDTQLFTYPCPCGDRFQISIDDMCDGEDIAVCPSCSLMIKVVYELHDLQEYYDEAGVEPPVPLVASA.

The DPH-type MB domain occupies 3–59 (VYDEVEIEDMTFDPDTQLFTYPCPCGDRFQISIDDMCDGEDIAVCPSCSLMIKVVYE). Fe cation is bound by residues cysteine 25, cysteine 27, cysteine 47, and cysteine 50.

The protein belongs to the DPH3 family. Component of the 2-(3-amino-3-carboxypropyl)histidine synthase complex composed of DPH1, DPH2, DPH3 and a NADH-dependent reductase, predominantly CBR1. It depends on Fe(2+) as a cofactor.

It localises to the cytoplasm. The protein resides in the nucleus. It carries out the reaction [3Fe-4S](1+)-[protein] + Fe(2+)-[Dph3] = [3Fe-4S](0)-[protein] + Fe(3+)-[Dph3]. The enzyme catalyses 2 [3Fe-4S](0)-[protein] + 2 Fe(2+)-[Dph3] + NADH = 2 [4Fe-4S](1+)-[protein] + 2 [Dph3] + NAD(+) + H(+). It functions in the pathway protein modification; peptidyl-diphthamide biosynthesis. Required for the first step of diphthamide biosynthesis, a post-translational modification of histidine which occurs in elongation factor 2. DPH1 and DPH2 transfer a 3-amino-3-carboxypropyl (ACP) group from S-adenosyl-L-methionine (SAM) to a histidine residue, the reaction is assisted by a reduction system comprising KTI11/DPH3 and a NADH-dependent reductase, predominantly CBR1. Acts as an electron donor to reduce the Fe-S cluster in DPH1-DPH2 keeping the [4Fe-4S] clusters in the active and reduced state. Restores iron to DPH1-DPH2 iron-sulfur clusters which have degraded from [4Fe-4S] to [3Fe-4S] by donating an iron atom to reform [4Fe-4S] clusters, in a manner dependent on the presence of elongation factor 2 and SAM. Associates with the elongator complex and is required for tRNA Wobble base modifications mediated by the elongator complex. The elongator complex is required for multiple tRNA modifications, including mcm5U (5-methoxycarbonylmethyl uridine), mcm5s 2U (5-methoxycarbonylmethyl-2-thiouridine), and ncm5U (5-carbamoylmethyl uridine). The sequence is that of Diphthamide biosynthesis protein 3 (DPH3) from Eremothecium gossypii (strain ATCC 10895 / CBS 109.51 / FGSC 9923 / NRRL Y-1056) (Yeast).